The primary structure comprises 209 residues: Glutathione S-transferase D1 (209 aa).

One can recognise a GST N-terminal domain in the interval 1–81 (MVDFYYLPGS…YLVEKYGKTD (81 aa)). Glutathione contacts are provided by residues Ser10, 51 to 53 (HTI), and 65 to 67 (ESR). One can recognise a GST C-terminal domain in the interval 87–208 (CPKKRAVINQ…AGCLEFKKYF (122 aa)).

Belongs to the GST superfamily. Delta family. As to quaternary structure, homodimer.

The enzyme catalyses RX + glutathione = an S-substituted glutathione + a halide anion + H(+). The catalysed reaction is 1,1,1-trichloro-2,2-bis(4-chlorophenyl)ethane = 1,1-dichloro-2,2-bis(4-chlorophenyl)ethylene + chloride + H(+). Conjugation of reduced glutathione to a wide number of exogenous and endogenous hydrophobic electrophiles. Has DDT dehydrochlorinase activity. May be involved in detoxification. This chain is Glutathione S-transferase D1, found in Drosophila melanogaster (Fruit fly).